The chain runs to 203 residues: Urease accessory protein UreG (203 aa).

Residue 12–19 (GPVGSGKT) coordinates GTP.

It belongs to the SIMIBI class G3E GTPase family. UreG subfamily. Homodimer. UreD, UreF and UreG form a complex that acts as a GTP-hydrolysis-dependent molecular chaperone, activating the urease apoprotein by helping to assemble the nickel containing metallocenter of UreC. The UreE protein probably delivers the nickel.

Its subcellular location is the cytoplasm. In terms of biological role, facilitates the functional incorporation of the urease nickel metallocenter. This process requires GTP hydrolysis, probably effectuated by UreG. In Alteromonas mediterranea (strain DSM 17117 / CIP 110805 / LMG 28347 / Deep ecotype), this protein is Urease accessory protein UreG.